The sequence spans 253 residues: 4-phosphopantoate--beta-alanine ligase (253 aa).

Residues R17, R39, 179–181 (DLN), 185–186 (RT), and 197–198 (NL) each bind ATP.

It belongs to the archaeal phosphopantothenate synthetase family. In terms of assembly, homodimer.

The enzyme catalyses (R)-4-phosphopantoate + beta-alanine + ATP = (R)-4'-phosphopantothenate + AMP + diphosphate + H(+). Its pathway is cofactor biosynthesis; coenzyme A biosynthesis. Its function is as follows. Catalyzes the condensation of (R)-4-phosphopantoate and beta-alanine to 4'-phosphopantothenate in the CoA biosynthesis pathway. In Methanosarcina mazei (strain ATCC BAA-159 / DSM 3647 / Goe1 / Go1 / JCM 11833 / OCM 88) (Methanosarcina frisia), this protein is 4-phosphopantoate--beta-alanine ligase.